Here is a 43-residue protein sequence, read N- to C-terminus: Alpha-conotoxin-like Leo-A1 (43 aa).

The propeptide occupies 1 to 26 (LTLDRASDDTDVAAEIMSGLIALAID). 2 disulfide bridges follow: cysteine 28–cysteine 34 and cysteine 29–cysteine 42. Residues 30–32 (SDS) form a lacks the Ser-Xaa-Pro motif that is crucial for potent interaction with nAChR region.

Belongs to the conotoxin A superfamily. Expressed by the venom duct.

It is found in the secreted. Alpha-conotoxins act on postsynaptic membranes, they bind to the nicotinic acetylcholine receptors (nAChR) and thus inhibit them. Has possibly a distinct nAChR binding mode from other alpha-conotoxins, due to a different three residue motif (lacks the Ser-Xaa-Pro motif). This Conus leopardus (Leopard cone) protein is Alpha-conotoxin-like Leo-A1.